Reading from the N-terminus, the 1235-residue chain is UPF0507 protein DEHA2G04334g (1235 aa).

The VPS9 domain maps to 323-487 (QNDDSDAIKI…LSSSMNDEPQ (165 aa)). Positions 1097–1124 (STTEADTTDTTDATDATHASPNLANSTN) are disordered. Positions 1100–1115 (EADTTDTTDATDATHA) are enriched in low complexity.

It belongs to the UPF0507 family.

In Debaryomyces hansenii (strain ATCC 36239 / CBS 767 / BCRC 21394 / JCM 1990 / NBRC 0083 / IGC 2968) (Yeast), this protein is UPF0507 protein DEHA2G04334g.